The primary structure comprises 342 residues: Succinylglutamate desuccinylase (342 aa).

Positions 64, 67, and 159 each coordinate Zn(2+). Glu-222 is a catalytic residue.

The protein belongs to the AspA/AstE family. Succinylglutamate desuccinylase subfamily. The cofactor is Zn(2+).

The catalysed reaction is N-succinyl-L-glutamate + H2O = L-glutamate + succinate. It functions in the pathway amino-acid degradation; L-arginine degradation via AST pathway; L-glutamate and succinate from L-arginine: step 5/5. Its function is as follows. Transforms N(2)-succinylglutamate into succinate and glutamate. In Burkholderia orbicola (strain AU 1054), this protein is Succinylglutamate desuccinylase.